Reading from the N-terminus, the 492-residue chain is Transmembrane protein 104 homolog (492 aa).

The Cytoplasmic portion of the chain corresponds to 1–18; that stretch reads MQSNTDSSGTSGTYSQTV. The chain crosses the membrane as a helical span at residues 19 to 39; it reads GLLYVFNLIVGTGALALPKAF. The Extracellular portion of the chain corresponds to 40-45; it reads QSAGWL. A helical membrane pass occupies residues 46–66; that stretch reads LSISLLTFSAFMSYVAATFVI. The Cytoplasmic segment spans residues 67-114; it reads EALSVANAVLSKKRRVEYDDVVVADGPSTFEIAKKVEVSEMASMFLSK. A helical membrane pass occupies residues 115–135; the sequence is VSLVFSYFAIIIYLFGDLAIY. Residues 136 to 177 are Extracellular-facing; the sequence is STTVPKSAMNIVCSTINATIVKSSDPCHESWPEILTRMTVYR. A glycan (N-linked (GlcNAc...) asparagine) is linked at Asn-152. Residues 178–198 traverse the membrane as a helical segment; the sequence is FFVIVFVVVVCLPMVIAGITK. The Cytoplasmic portion of the chain corresponds to 199–210; the sequence is TRHIQIMTTLSR. The chain crosses the membrane as a helical span at residues 211–231; sequence WAAFILMISLATMQLSSQGAA. The Extracellular segment spans residues 232-238; it reads AHPPAYN. Residues 239–259 traverse the membrane as a helical segment; the sequence is FHGFGSLFGCAVYAFMCHHSI. At 260–275 the chain is on the cytoplasmic side; the sequence is PSLITPMRTKENVFGK. The helical transmembrane segment at 276-296 threads the bilayer; sequence IAVVYGIVGVFYFTLSLTGAF. Topologically, residues 297–325 are extracellular; that stretch reads AFEHVQDIYTLNFLHDDNTSLVYSIIDYF. A glycan (N-linked (GlcNAc...) asparagine) is linked at Asn-314. A helical transmembrane segment spans residues 326-346; sequence LALFPIITLTSSYPIIALTLI. Over 347-391 the chain is Cytoplasmic; that stretch reads NNFKVVKDILCPKTGQENESLLEADNQVEDNDTDDEREARNGNPK. The segment covering 367-382 has biased composition (acidic residues); it reads LLEADNQVEDNDTDDE. Residues 367 to 387 form a disordered region; the sequence is LLEADNQVEDNDTDDEREARN. The helical transmembrane segment at 392-412 threads the bilayer; the sequence is TIFDVLVPTLVLALPTFLSLL. Residues 413-415 are Extracellular-facing; that stretch reads TDD. Residues 416–436 form a helical membrane-spanning segment; it reads MLLLASITGSFPGVAVQFAIP. The Cytoplasmic portion of the chain corresponds to 437 to 466; the sequence is CLLVTAARKHARSVLNFPVPRKNNSPFQSR. Residues 467-487 traverse the membrane as a helical segment; that stretch reads FWIMLISSWAGFSMIMVLLNL. Residues 488-492 are Extracellular-facing; it reads VGVKF.

It belongs to the TMEM104 family.

The protein localises to the membrane. This Caenorhabditis briggsae protein is Transmembrane protein 104 homolog.